A 405-amino-acid polypeptide reads, in one-letter code: Probable tRNA sulfurtransferase (405 aa).

The THUMP domain maps to Asp-60–Thr-165. ATP is bound by residues Met-183–Leu-184, His-208–Phe-209, Arg-265, Gly-287, and Gln-296.

Belongs to the ThiI family.

It is found in the cytoplasm. It carries out the reaction [ThiI sulfur-carrier protein]-S-sulfanyl-L-cysteine + a uridine in tRNA + 2 reduced [2Fe-2S]-[ferredoxin] + ATP + H(+) = [ThiI sulfur-carrier protein]-L-cysteine + a 4-thiouridine in tRNA + 2 oxidized [2Fe-2S]-[ferredoxin] + AMP + diphosphate. It catalyses the reaction [ThiS sulfur-carrier protein]-C-terminal Gly-Gly-AMP + S-sulfanyl-L-cysteinyl-[cysteine desulfurase] + AH2 = [ThiS sulfur-carrier protein]-C-terminal-Gly-aminoethanethioate + L-cysteinyl-[cysteine desulfurase] + A + AMP + 2 H(+). It participates in cofactor biosynthesis; thiamine diphosphate biosynthesis. Its function is as follows. Catalyzes the ATP-dependent transfer of a sulfur to tRNA to produce 4-thiouridine in position 8 of tRNAs, which functions as a near-UV photosensor. Also catalyzes the transfer of sulfur to the sulfur carrier protein ThiS, forming ThiS-thiocarboxylate. This is a step in the synthesis of thiazole, in the thiamine biosynthesis pathway. The sulfur is donated as persulfide by IscS. The sequence is that of Probable tRNA sulfurtransferase from Lacticaseibacillus casei (strain BL23) (Lactobacillus casei).